A 293-amino-acid chain; its full sequence is uncharacterized protein (293 aa).

Disordered stretches follow at residues 1 to 95 (MFLR…KDKA) and 268 to 293 (EETA…GRAL). Residues serine 34, serine 35, and serine 89 each carry the phosphoserine modification. Basic and acidic residues-rich tracts occupy residues 85-95 (KRMDSLKKDKA) and 277-286 (GQGKEAKEQT).

This is an uncharacterized protein from Rattus norvegicus (Rat).